Consider the following 77-residue polypeptide: Acyl carrier protein (77 aa).

Residues 2 to 77 (AEVFDRVKEI…DAVDYINSKA (76 aa)) enclose the Carrier domain. Serine 37 carries the O-(pantetheine 4'-phosphoryl)serine modification.

Belongs to the acyl carrier protein (ACP) family. In terms of processing, 4'-phosphopantetheine is transferred from CoA to a specific serine of apo-ACP by AcpS. This modification is essential for activity because fatty acids are bound in thioester linkage to the sulfhydryl of the prosthetic group.

It localises to the cytoplasm. It functions in the pathway lipid metabolism; fatty acid biosynthesis. Its function is as follows. Carrier of the growing fatty acid chain in fatty acid biosynthesis. The chain is Acyl carrier protein from Oceanobacillus iheyensis (strain DSM 14371 / CIP 107618 / JCM 11309 / KCTC 3954 / HTE831).